A 156-amino-acid polypeptide reads, in one-letter code: Transcriptional repressor NrdR (156 aa).

A zinc finger spans residues 3 to 34; sequence CPKCNSTQSKVVDSRHADELNAIRRRRECENC. Residues 49 to 139 form the ATP-cone domain; that stretch reads LIVVKKDGTR…VYKEFKDVDQ (91 aa).

The protein belongs to the NrdR family. The cofactor is Zn(2+).

Its function is as follows. Negatively regulates transcription of bacterial ribonucleotide reductase nrd genes and operons by binding to NrdR-boxes. This chain is Transcriptional repressor NrdR, found in Staphylococcus aureus (strain NCTC 8325 / PS 47).